The sequence spans 236 residues: 2-C-methyl-D-erythritol 4-phosphate cytidylyltransferase (236 aa).

This sequence belongs to the IspD/TarI cytidylyltransferase family. IspD subfamily. Homodimer.

The catalysed reaction is 2-C-methyl-D-erythritol 4-phosphate + CTP + H(+) = 4-CDP-2-C-methyl-D-erythritol + diphosphate. Its pathway is isoprenoid biosynthesis; isopentenyl diphosphate biosynthesis via DXP pathway; isopentenyl diphosphate from 1-deoxy-D-xylulose 5-phosphate: step 2/6. Its function is as follows. Catalyzes the formation of 4-diphosphocytidyl-2-C-methyl-D-erythritol from CTP and 2-C-methyl-D-erythritol 4-phosphate (MEP). The chain is 2-C-methyl-D-erythritol 4-phosphate cytidylyltransferase from Escherichia coli O45:K1 (strain S88 / ExPEC).